We begin with the raw amino-acid sequence, 853 residues long: DNA mismatch repair protein MutS (853 aa).

614–621 (GPNMGGKS) contributes to the ATP binding site.

It belongs to the DNA mismatch repair MutS family.

Functionally, this protein is involved in the repair of mismatches in DNA. It is possible that it carries out the mismatch recognition step. This protein has a weak ATPase activity. The protein is DNA mismatch repair protein MutS of Escherichia coli O6:H1 (strain CFT073 / ATCC 700928 / UPEC).